The following is a 350-amino-acid chain: MSQLQVRHDWKREEIEALFALPMNDLLFKAHSIHREVYDPNEVQISRLLSIKTGACPEDCKYCPQSARYDTGLEKERLLAMETVLTEARSAKAAGASRFCMGAAWRNPKDKDMPYLKQMVQEVKALGMETCMTLGMLSAEQANELADAGLDYYNHNLDTSPEYYGDVITTRTYQNRLDTLSHVRASGMKVCSGGIVGMGEKATDRAGLLQQLANLPQHPDSVPINMLVKVAGTPFEKLDDLDPLEFVRTIAVARILMPKSRVRLSAGRENMTDELQAMCFFAGANSIFYGCKLLTTPNPEESDDMGLFRRLGLRPEQGAAATIDDEQAVLAKAAAHQDKASAPFYDAAAL.

A Radical SAM core domain is found at 41–268; sequence NEVQISRLLS…KSRVRLSAGR (228 aa). Residues C56, C60, and C63 each coordinate [4Fe-4S] cluster. Residues C100, C131, C191, and R263 each coordinate [2Fe-2S] cluster.

Belongs to the radical SAM superfamily. Biotin synthase family. In terms of assembly, homodimer. [4Fe-4S] cluster is required as a cofactor. The cofactor is [2Fe-2S] cluster.

The enzyme catalyses (4R,5S)-dethiobiotin + (sulfur carrier)-SH + 2 reduced [2Fe-2S]-[ferredoxin] + 2 S-adenosyl-L-methionine = (sulfur carrier)-H + biotin + 2 5'-deoxyadenosine + 2 L-methionine + 2 oxidized [2Fe-2S]-[ferredoxin]. The protein operates within cofactor biosynthesis; biotin biosynthesis; biotin from 7,8-diaminononanoate: step 2/2. Its function is as follows. Catalyzes the conversion of dethiobiotin (DTB) to biotin by the insertion of a sulfur atom into dethiobiotin via a radical-based mechanism. This Shewanella sp. (strain ANA-3) protein is Biotin synthase.